Reading from the N-terminus, the 142-residue chain is MVRRRHDGRGSDDRPTVRGGARVNIALVLLGGMLGAPVRYLIDRAVTARIDSPLPLGTLTVNIVGSAVLGGLIGASANGWLLTAAGTGFCGALTTFSTFGYETIRLVTDGAYGYALGNVVISVAASVGAVYAAVSLTNWVTP.

A run of 4 helical transmembrane segments spans residues 23 to 43 (VNIA…YLID), 54 to 74 (LPLG…GLIG), 79 to 99 (GWLL…FSTF), and 116 to 136 (LGNV…AVSL). Residues glycine 91 and threonine 94 each coordinate Na(+).

Belongs to the fluoride channel Fluc/FEX (TC 1.A.43) family.

The protein localises to the cell membrane. It catalyses the reaction fluoride(in) = fluoride(out). Its activity is regulated as follows. Na(+) is not transported, but it plays an essential structural role and its presence is essential for fluoride channel function. In terms of biological role, fluoride-specific ion channel. Important for reducing fluoride concentration in the cell, thus reducing its toxicity. This is Fluoride-specific ion channel FluC 1 from Nocardia farcinica (strain IFM 10152).